A 267-amino-acid chain; its full sequence is Strigolactone esterase RMS3 (267 aa).

The active-site Nucleophile is S96. Residues D218 and H247 contribute to the active site.

Belongs to the AB hydrolase superfamily.

The protein localises to the cytoplasm. The protein resides in the nucleus. In terms of biological role, involved in strigolactone signaling pathway. Functions downstream of strigolactone synthesis, as a component of hormone signaling and as an enzyme that participates in the conversion of strigolactones to the bioactive form. Binds and hydrolyzes the synthetic strigolactone analog GR24 and its enantiomers in vitro. Forms a stable covalent complex with the D-ring of strigolactone, which is essential for hormone bioactivity. The D-ring is attached to His-247 of the catalytic triad. The hydrolysis of strigolactone into a covalently linked intermediate molecule is required to trigger strigolactone signaling. This mechanism defines RMS3 as a non-canonical hormone receptor with dual functions to generate and sense the active form of strigolactone. Strigolactones are hormones that inhibit tillering and shoot branching through the MAX-dependent pathway, contribute to the regulation of shoot architectural response to phosphate-limiting conditions and function as rhizosphere signal that stimulates hyphal branching of arbuscular mycorrhizal fungi and trigger seed germination of root parasitic weeds. In Pisum sativum (Garden pea), this protein is Strigolactone esterase RMS3.